Reading from the N-terminus, the 329-residue chain is Peroxidase 50 (329 aa).

The signal sequence occupies residues Met1–Ala25. Intrachain disulfides connect Cys36-Cys119, Cys69-Cys74, Cys125-Cys325, and Cys204-Cys236. The Proton acceptor role is filled by His67. Asp68, Val71, Gly73, Asp75, and Ser77 together coordinate Ca(2+). Residue Pro167 coordinates substrate. His197 contributes to the heme b binding site. Thr198 provides a ligand contact to Ca(2+). An N-linked (GlcNAc...) asparagine glycan is attached at Asn215. Asp249, Thr252, and Asp257 together coordinate Ca(2+).

This sequence belongs to the peroxidase family. Classical plant (class III) peroxidase subfamily. It depends on heme b as a cofactor. Ca(2+) serves as cofactor. As to expression, expressed in roots and leaves.

It localises to the secreted. The enzyme catalyses 2 a phenolic donor + H2O2 = 2 a phenolic radical donor + 2 H2O. Functionally, removal of H(2)O(2), oxidation of toxic reductants, biosynthesis and degradation of lignin, suberization, auxin catabolism, response to environmental stresses such as wounding, pathogen attack and oxidative stress. These functions might be dependent on each isozyme/isoform in each plant tissue. Its function is as follows. Exhibits a Ca(2+)-pectate binding affinity which could be interpreted in vivo as a specificity to interact with the pectic structure of the cell wall. In Arabidopsis thaliana (Mouse-ear cress), this protein is Peroxidase 50 (PER50).